A 103-amino-acid chain; its full sequence is Histone H4 type VIII (103 aa).

Residues 1 to 14 (MSGRGKGGKGLGKG) show a composition bias toward gly residues. Residues 1–20 (MSGRGKGGKGLGKGGAKRHR) are disordered. An N-acetylserine modification is found at Ser-2. Ser-2 carries the phosphoserine modification. At Arg-4 the chain carries Asymmetric dimethylarginine; by PRMT1; alternate. Arg-4 is subject to Citrulline; alternate. At Arg-4 the chain carries Omega-N-methylarginine; by PRMT1; alternate. Position 4 is a symmetric dimethylarginine; by PRMT5 and PRMT7; alternate (Arg-4). Residues Lys-6, Lys-9, Lys-13, and Lys-17 each carry the N6-(2-hydroxyisobutyryl)lysine; alternate modification. An N6-acetyl-N6-methyllysine; alternate modification is found at Lys-6. N6-acetyllysine is present on residues Lys-6, Lys-9, Lys-13, and Lys-17. Residues Lys-6, Lys-9, Lys-13, and Lys-17 each carry the N6-butyryllysine; alternate modification. Lys-6 bears the N6-glutaryllysine; alternate mark. N6-lactoyllysine; alternate occurs at positions 6, 9, 13, and 17. An N6-propionyllysine; alternate modification is found at Lys-9. Position 13 is an N6-acetyl-N6-methyllysine; alternate (Lys-13). Residue Lys-13 is modified to N6-glutaryllysine; alternate. Lys-13 bears the N6-methyllysine; alternate mark. Lys-17 bears the N6-propionyllysine; alternate mark. Lys-21 is subject to N6-methyllysine; alternate. Lys-21 is modified (N6,N6,N6-trimethyllysine; alternate). Lys-21 carries the N6,N6-dimethyllysine; alternate modification. N6-(2-hydroxyisobutyryl)lysine; alternate is present on residues Lys-32 and Lys-45. Lys-32 bears the N6-acetyllysine mark. N6-butyryllysine; alternate is present on residues Lys-32 and Lys-45. Lys-32 bears the N6-glutaryllysine; alternate mark. Lys-32 carries the post-translational modification N6-lactoyllysine; alternate. N6-propionyllysine; alternate occurs at positions 32 and 45. Lys-32 carries the post-translational modification N6-succinyllysine; alternate. A Glycyl lysine isopeptide (Lys-Gly) (interchain with G-Cter in UFM1); alternate cross-link involves residue Lys-32. Ser-48 bears the Phosphoserine mark. Residue Tyr-52 is modified to Phosphotyrosine. N6-acetyllysine is present on Lys-60. Lys-60, Lys-78, and Lys-80 each carry N6-glutaryllysine; alternate. Lys-60 is subject to N6-(2-hydroxyisobutyryl)lysine. Residues Lys-78 and Lys-80 each carry the N6-(2-hydroxyisobutyryl)lysine; alternate modification. An N6-butyryllysine; alternate mark is found at Lys-78 and Lys-80. Position 78 is an N6-lactoyllysine; alternate (Lys-78). Residues Lys-78 and Lys-80 each carry the N6-propionyllysine; alternate modification. Lys-78 carries the N6-succinyllysine modification. N6-acetyllysine is present on Lys-80. Phosphotyrosine is present on Tyr-89. The residue at position 92 (Lys-92) is an N6-(2-hydroxyisobutyryl)lysine; alternate. The residue at position 92 (Lys-92) is an N6-butyryllysine; alternate. The residue at position 92 (Lys-92) is an N6-glutaryllysine; alternate. The residue at position 92 (Lys-92) is an N6-lactoyllysine; alternate. Lys-92 is subject to N6-propionyllysine; alternate. Lys-92 bears the N6-succinyllysine; alternate mark. Residue Lys-92 is modified to N6-acetyllysine; alternate. Residue Lys-92 forms a Glycyl lysine isopeptide (Lys-Gly) (interchain with G-Cter in ubiquitin); alternate linkage.

It belongs to the histone H4 family. The nucleosome is a histone octamer containing two molecules each of H2A, H2B, H3 and H4 assembled in one H3-H4 heterotetramer and two H2A-H2B heterodimers. The octamer wraps approximately 147 bp of DNA. Acetylation at Lys-6 (H4K5ac), Lys-9 (H4K8ac), Lys-13 (H4K12ac) and Lys-17 (H4K16ac) occurs in coding regions of the genome but not in heterochromatin. Post-translationally, citrullination at Arg-4 (H4R3ci) by PADI4 impairs methylation. In terms of processing, monomethylation and asymmetric dimethylation at Arg-4 (H4R3me1 and H4R3me2a, respectively) by PRMT1 favors acetylation at Lys-9 (H4K8ac) and Lys-13 (H4K12ac). Demethylation is performed by JMJD6. Symmetric dimethylation on Arg-4 (H4R3me2s) by the PRDM1/PRMT5 complex may play a crucial role in the germ-cell lineage. Monomethylated, dimethylated or trimethylated at Lys-21 (H4K20me1, H4K20me2, H4K20me3). Monomethylation is performed by KMT5A/SET8. Trimethylation is performed by KMT5B and KMT5C and induces gene silencing. Monomethylated at Lys-13 (H4K12me1) by N6AMT1; H4K12me1 modification is present at the promoters of numerous genes encoding cell cycle regulators. Post-translationally, acetyl-methylated at Lys-6 and Lys-13 (H4K5acme and H4K12acme, respectively), acetyl-methylation is an epigenetic mark of active chromatin associated with increased transcriptional initiation. Acetyl-methylation is formed by acetylation by EP300/p300 of lysine residues that are already monomethylated on the same side chain. H4K5acme and H4K12acme marks specifically bind BRD2. In terms of processing, ubiquitinated by the CUL4-DDB-RBX1 complex in response to ultraviolet irradiation. This may weaken the interaction between histones and DNA and facilitate DNA accessibility to repair proteins. Monoubiquitinated at Lys-92 of histone H4 (H4K91ub1) in response to DNA damage. The exact role of H4K91ub1 in DNA damage response is still unclear but it may function as a licensing signal for additional histone H4 post-translational modifications such as H4 Lys-21 methylation (H4K20me). Sumoylated, which is associated with transcriptional repression. Post-translationally, butyrylation of histones marks active promoters and competes with histone acetylation. In terms of processing, glutarylation at Lys-92 (H4K91glu) destabilizes nucleosomes by promoting dissociation of the H2A-H2B dimers from nucleosomes. Ufmylated; monofmylated by UFL1 at Lys-32 (H4K31Ufm1) in response to DNA damage. Post-translationally, lactylated in macrophages by EP300/P300 by using lactoyl-CoA directly derived from endogenous or exogenous lactate, leading to stimulates gene transcription. Delactylated by SIRT3 at Lys-17 (H4K16la).

It is found in the nucleus. Its subcellular location is the chromosome. Functionally, core component of nucleosome. Nucleosomes wrap and compact DNA into chromatin, limiting DNA accessibility to the cellular machineries which require DNA as a template. Histones thereby play a central role in transcription regulation, DNA repair, DNA replication and chromosomal stability. DNA accessibility is regulated via a complex set of post-translational modifications of histones, also called histone code, and nucleosome remodeling. This is Histone H4 type VIII (H4-VIII) from Gallus gallus (Chicken).